Reading from the N-terminus, the 302-residue chain is 4-hydroxy-tetrahydrodipicolinate synthase (302 aa).

T55 is a pyruvate binding site. The active-site Proton donor/acceptor is the Y144. Residue K172 is the Schiff-base intermediate with substrate of the active site. Residue V214 participates in pyruvate binding.

This sequence belongs to the DapA family. Homotetramer; dimer of dimers.

The protein localises to the cytoplasm. The enzyme catalyses L-aspartate 4-semialdehyde + pyruvate = (2S,4S)-4-hydroxy-2,3,4,5-tetrahydrodipicolinate + H2O + H(+). It functions in the pathway amino-acid biosynthesis; L-lysine biosynthesis via DAP pathway; (S)-tetrahydrodipicolinate from L-aspartate: step 3/4. Its function is as follows. Catalyzes the condensation of (S)-aspartate-beta-semialdehyde [(S)-ASA] and pyruvate to 4-hydroxy-tetrahydrodipicolinate (HTPA). The sequence is that of 4-hydroxy-tetrahydrodipicolinate synthase from Prochlorococcus marinus (strain MIT 9211).